A 172-amino-acid chain; its full sequence is RNA pyrophosphohydrolase (172 aa).

The Nudix hydrolase domain maps to 6-149; that stretch reads GYRPNVGIIL…KRDVYRMALK (144 aa). Positions 38 to 59 match the Nudix box motif; that stretch reads GGIKYGESPEQAMYRELMEEVG.

It belongs to the Nudix hydrolase family. RppH subfamily. It depends on a divalent metal cation as a cofactor.

Its function is as follows. Accelerates the degradation of transcripts by removing pyrophosphate from the 5'-end of triphosphorylated RNA, leading to a more labile monophosphorylated state that can stimulate subsequent ribonuclease cleavage. The chain is RNA pyrophosphohydrolase from Methylobacillus flagellatus (strain ATCC 51484 / DSM 6875 / VKM B-1610 / KT).